An 875-amino-acid chain; its full sequence is Metal transporter CNNM2 (875 aa).

Residues Met1 to Lys250 lie on the Extracellular side of the membrane. Asn112 carries an N-linked (GlcNAc...) asparagine glycan. The disordered stretch occupies residues Thr121–Arg149. A helical transmembrane segment spans residues Phe251–Met271. One can recognise a CNNM transmembrane domain in the interval Phe251–Glu431. At Phe272 to Asn313 the chain is on the cytoplasmic side. An intramembrane region (helical) is located at residues Tyr314–Leu334. The Cytoplasmic portion of the chain corresponds to Asp335–Ala338. The helical transmembrane segment at Gly339–Val359 threads the bilayer. At Pro360 to Gly368 the chain is on the extracellular side. The helical transmembrane segment at Leu369–Ala389 threads the bilayer. At Ser390–Ile875 the chain is on the cytoplasmic side. 2 consecutive CBS domains span residues Met450 to Leu511 and Tyr518 to Glu584. The segment at Ala741–Ser763 is disordered. Ser761 is subject to Phosphoserine.

This sequence belongs to the ACDP family. Isoform 1 and isoform 2 may interact with each other. In terms of processing, the N-terminus is cleaved within the endoplasmic reticulum. The signal peptidase complex seems to be involved in the processing, but the exact cleavage site has not been identified. As to expression, widely expressed, with highest levels in kidney, lung, spleen and testis. In the kidney, predominantly expressed in the distal convoluted tubule and, at lower levels, in the connecting tubule (at protein level).

The protein resides in the cell membrane. Functionally, divalent metal cation transporter. Mediates transport of divalent metal cations in an order of Mg(2+) &gt; Co(2+) &gt; Mn(2+) &gt; Sr(2+) &gt; Ba(2+) &gt; Cu(2+) &gt; Fe(2+). The chain is Metal transporter CNNM2 (Cnnm2) from Mus musculus (Mouse).